The sequence spans 194 residues: Large ribosomal subunit protein eL15 (194 aa).

Residues 164–194 form a disordered region; it reads AGRKARGLRRKGRGAEKVRPSLRANFRKKRR. A compositionally biased stretch (basic residues) spans 166-175; sequence RKARGLRRKG.

It belongs to the eukaryotic ribosomal protein eL15 family.

The sequence is that of Large ribosomal subunit protein eL15 (rpl15e) from Archaeoglobus fulgidus (strain ATCC 49558 / DSM 4304 / JCM 9628 / NBRC 100126 / VC-16).